Here is a 301-residue protein sequence, read N- to C-terminus: Homeobox protein Hox-D13 (301 aa).

2 disordered regions span residues 1–20 (MDGL…TPGQ) and 55–75 (GERS…PGSG). Positions 8–18 (SSGGGGGGGTP) are enriched in gly residues. A DNA-binding region (homeobox) is located at residues 234-293 (GRKKRVPYTKLQLKELENEYAINKFINKDKRRRISAATNLSERQVTIWFQNRRVKDKKIV).

The protein belongs to the Abd-B homeobox family.

The protein localises to the nucleus. Functionally, sequence-specific transcription factor that binds gene promoters and activates their transcription. Part of a developmental regulatory system that provides cells with specific positional identities on the anterior-posterior axis. The protein is Homeobox protein Hox-D13 (HOXD13) of Gallus gallus (Chicken).